Reading from the N-terminus, the 435-residue chain is Sex peptide receptor (435 aa).

The Extracellular portion of the chain corresponds to 1 to 93 (MDNYTDVLYQ…PLEYAMPLYG (93 aa)). Residues 94 to 114 (YCMPFLLIITIISNSLIVLVL) form a helical membrane-spanning segment. Over 115–124 (SKKSMATPTN) the chain is Cytoplasmic. The chain crosses the membrane as a helical span at residues 125–145 (FVLMGMAICDMLTVIFPAPGL). Topologically, residues 146 to 168 (WYMYTFGNHYKPLHPVSMCLAYS) are extracellular. Residues 169-189 (IFNEIMPAMCHTISVWLTLAL) form a helical membrane-spanning segment. Residues 190 to 211 (AVQRYIYVCHAPMARTWCTMPR) are Cytoplasmic-facing. A helical transmembrane segment spans residues 212–229 (VRRCTAYIALLAFLHQLP). Topologically, residues 230–276 (RFFDRTYMPLVIEWNGSPTEVCHLETSMWVHDYIGVDLYYTSYYLFR) are extracellular. A helical membrane pass occupies residues 277–297 (VLFVHLLPCIILVTLNILLFA). At 298–327 (AMRQAQERRKLLFRENRKKECKKLRETNCT) the chain is on the cytoplasmic side. Residues 328–348 (TLMLIVVVSVFLLAEIPIAVV) traverse the membrane as a helical segment. At 349-368 (TAMHIVSSLIIEFLDYGLAN) the chain is on the extracellular side. Residues 369-389 (ICIMLTNFFLVFSYPINFGIY) traverse the membrane as a helical segment. Residues 390 to 435 (CGMSRQFRETFKEIFLGRLMAKKDSSTKYSIVNGARTCTNTNETVL) lie on the Cytoplasmic side of the membrane.

The protein belongs to the G-protein coupled receptor 1 family. In the female, expressed in the reproductive organs; strongly expressed in the spermathecae and the lower oviduct. No expression in the male reproductive organs. In the central nervous system of both sexes, it is expressed in the brain and ventral nerve cord (VNC); strongly expressed in the ventral regions of the suboesophageal ganglion, the cervical connective and in many nerve roots of the brain and VNC. Expressed in the s-LNvs and l-LNvs pdf neurons (at protein level).

The protein localises to the cell membrane. Its function is as follows. Receptor for two functionally unrelated ligands; SP (A70A) for controlling reproductive behaviors and MIP for controlling sleep behavior. MIP-SPR pathway functions as a sleep homeostat which perceives the need for sleep and stabilizes it by providing a slow-acting inhibitory input to the fly arousal system that involve the pigment dispersing factor (pdf) neurons. SP-SPR is one of the multiple SP pathways that induce female post-mating behavioral responses (PMR) such as the suppression of mating receptivity and initiation of egg laying. The PMR switch is achieved by mediating the synaptic output of neurons such as those expressing fruitless (fru), double sex (dsx) and pickpocket (ppk). The protein is Sex peptide receptor of Drosophila melanogaster (Fruit fly).